We begin with the raw amino-acid sequence, 312 residues long: tRNA dimethylallyltransferase (312 aa).

11-18 (GATATGKT) contributes to the ATP binding site. 13–18 (TATGKT) lines the substrate pocket. The interval 36–39 (DSRQ) is interaction with substrate tRNA.

The protein belongs to the IPP transferase family. Monomer. Mg(2+) serves as cofactor.

It catalyses the reaction adenosine(37) in tRNA + dimethylallyl diphosphate = N(6)-dimethylallyladenosine(37) in tRNA + diphosphate. In terms of biological role, catalyzes the transfer of a dimethylallyl group onto the adenine at position 37 in tRNAs that read codons beginning with uridine, leading to the formation of N6-(dimethylallyl)adenosine (i(6)A). The protein is tRNA dimethylallyltransferase of Thermosynechococcus vestitus (strain NIES-2133 / IAM M-273 / BP-1).